Reading from the N-terminus, the 81-residue chain is Consomatin Le1 (81 aa).

An N-terminal signal peptide occupies residues 1–22; it reads MQTAYWVMVMMMVWITAPLSEG. The propeptide occupies 23 to 57; the sequence is GKPNDVIRGLVPDDLTPQLILRSLISRRRSDKDVR. Glu-58 bears the 4-carboxyglutamate mark. The cysteines at positions 62 and 67 are disulfide-linked. Trp-64 is modified (D-tryptophan). Pro-69 is modified (4-hydroxyproline). Positions 71–81 are excised as a propeptide; sequence LWRRHDLKGKD.

It belongs to the conotoxin C superfamily. Consomatin family. Expressed by the venom duct.

Its subcellular location is the secreted. Moderately activates human somatostatin receptors (SSTR) with a preferential activation of SSTR1 and SSTR4. In vivo, does not cause behavioral changes in mice within a few minutes of intracranial injection, but causes a progressive loss of movement thereafter. Four to five hours after injection, mice recover, even with the highest dose tested. Shows antinociception and antihyperalgesia activities in two mouse models of acute pain, most probably by acting outside the central nervous system. The polypeptide is Consomatin Le1 (Conus lenavati (Cone snail)).